The primary structure comprises 20 residues: Short cationic peptide-3a (20 aa).

E20 bears the Glutamic acid 1-amide mark.

In terms of tissue distribution, expressed by the venom gland.

Its subcellular location is the secreted. The protein is Short cationic peptide-3a of Cupiennius salei (American wandering spider).